Reading from the N-terminus, the 417-residue chain is Diphosphomevalonate decarboxylase 1 (417 aa).

22 to 25 (YWGK) lines the (R)-5-diphosphomevalonate pocket. Residues 39-47 (RVSLDPDHL) carry the Peroxisomal targeting signal PTS2 motif. (R)-5-diphosphomevalonate is bound by residues Arg-77, 160–165 (SGSACR), and Thr-216.

It belongs to the diphosphomevalonate decarboxylase family. In terms of assembly, homodimer.

Its subcellular location is the peroxisome. It catalyses the reaction (R)-5-diphosphomevalonate + ATP = isopentenyl diphosphate + ADP + phosphate + CO2. It functions in the pathway isoprenoid biosynthesis; isopentenyl diphosphate biosynthesis via mevalonate pathway; isopentenyl diphosphate from (R)-mevalonate: step 3/3. Performs the first committed step in the biosynthesis of isoprene-containing compounds such as sterols and terpenoids. Component of the triterpene saponins (e.g. ginsenosides or panaxosides) and phytosterols biosynthetic pathways. Catalyzes the conversion of mevalonate diphosphate to isopentenyl diphosphate (IPP). The sequence is that of Diphosphomevalonate decarboxylase 1 from Panax ginseng (Korean ginseng).